We begin with the raw amino-acid sequence, 277 residues long: Homeobox protein Nkx-6.2 (277 aa).

The repressor domain stretch occupies residues 89-142 (AGVYFGPAAAVARGYPKPLAELPGRPPIFWPGVVQGAPWRDPRLAGPAPAGGVL). 2 disordered regions span residues 132–155 (LAGPAPAGGVLDKDGKKKHSRPTF) and 210–250 (EMAS…DDEK). The homeobox DNA-binding region spans 148–207 (KKHSRPTFSGQQIFALEKTFEQTKYLAGPERARLAYSLGMTESQVKVWFQNRRTKWRKRH). The segment covering 216–226 (KKQDSDAEKLK) has biased composition (basic and acidic residues).

As to expression, highest expression in brain.

It localises to the nucleus. Functionally, transcription factor with repressor activity involved in the regulation of axon-glial interactions at myelin paranodes in oligodendrocytes. Binds to the consensus DNA sequence 5'-(A/T)TTAATGA-3'. In oligodendrocytes, binds to MBP and PLP1 promoter regions. This Homo sapiens (Human) protein is Homeobox protein Nkx-6.2 (NKX6-2).